An 80-amino-acid polypeptide reads, in one-letter code: Conotoxin PnMKLT1-0121 (80 aa).

Residues 1 to 22 (MKLTCMMIVAVLFLTAWTFATA) form the signal peptide. Positions 23-49 (DDPRNRLENFFSKTQHEMKNPEASKLN) are excised as a propeptide. Cystine bridges form between C52/C67, C59/C71, and C66/C75.

It belongs to the conotoxin O1 superfamily. As to expression, expressed by the venom duct.

It is found in the secreted. In Conus pennaceus (Feathered cone), this protein is Conotoxin PnMKLT1-0121.